We begin with the raw amino-acid sequence, 569 residues long: Glutamate--tRNA ligase, chloroplastic/mitochondrial (569 aa).

59 to 61 is an L-glutamate binding site; that stretch reads RFA. Positions 62–72 match the 'HIGH' region motif; that stretch reads PSPTGNLHVGG. ATP is bound at residue His69. L-glutamate is bound by residues Glu95, 247–251, and Arg265; that span reads YNFCV. ATP contacts are provided by residues Glu268 and 303-307; that span reads KLSKR. The short motif at 303 to 307 is the 'KMSKS' region element; that stretch reads KLSKR.

The protein belongs to the class-I aminoacyl-tRNA synthetase family. Glutamate--tRNA ligase type 1 subfamily.

It localises to the plastid. Its subcellular location is the chloroplast. The protein localises to the mitochondrion. It catalyses the reaction tRNA(Glu) + L-glutamate + ATP = L-glutamyl-tRNA(Glu) + AMP + diphosphate. Catalyzes the attachment of glutamate to tRNA(Glu) in a two-step reaction: glutamate is first activated by ATP to form Glu-AMP and then transferred to the acceptor end of tRNA(Glu). This Nicotiana tabacum (Common tobacco) protein is Glutamate--tRNA ligase, chloroplastic/mitochondrial.